A 324-amino-acid polypeptide reads, in one-letter code: Probable UDP-sugar transporter protein SLC35A4 (324 aa).

Residues 1–18 (MSVEDGGMPGLSRPRQAR) lie on the Cytoplasmic side of the membrane. Residues 19–39 (WTLMLLLSTAMYGAHAPLLAL) traverse the membrane as a helical segment. Over 40 to 52 (CHVDGRVPFRPSS) the chain is Lumenal. The chain crosses the membrane as a helical span at residues 53-73 (AVLLTELTKLLLCAFSLLVGW). The Cytoplasmic segment spans residues 74–85 (QAWPQGAPPWRQ). The chain crosses the membrane as a helical span at residues 86–106 (AAPFALSALLYGANNNLVIYL). The Lumenal portion of the chain corresponds to 107 to 142 (QRYMDPSTYQVLSNLKIGSTAVLYCLCLRHRLSVRQ). The chain crosses the membrane as a helical span at residues 143–163 (GLALLLLMAAGACYAAGGLQV). Over 164–180 (PGNTLPRPPPAAAASPM) the chain is Cytoplasmic. Residues 181 to 201 (PLHITPLGLLLLILYCLISGL) form a helical membrane-spanning segment. The Lumenal portion of the chain corresponds to 202–214 (SSVYTELLMKRQQ). A helical transmembrane segment spans residues 215–235 (LPLALQNLFLYTFGVLLNLGL). The Cytoplasmic portion of the chain corresponds to 236–250 (HAGGGPGPGLLEGFS). The chain crosses the membrane as a helical span at residues 251-271 (GWAALVVLSQALNGLLMSVVM). At 272–275 (KHGS) the chain is on the lumenal side. Residues 276 to 298 (SITRLFVVSCSLVVNAVLSAVLL) form a helical membrane-spanning segment. Topologically, residues 299–324 (RLQLTAAFFLATLLIGLAMRLYYGSR) are cytoplasmic.

This sequence belongs to the nucleotide-sugar transporter family. SLC35A subfamily. In terms of assembly, found in a complex with SLC35A2 and SLC35A3.

The protein localises to the golgi apparatus membrane. It catalyses the reaction CDP-L-ribitol(in) + CDP(out) = CDP-L-ribitol(out) + CDP(in). Its function is as follows. Mediates the transport of CDP-ribitol. Does not exhibit CMP-sialic acid, UDP-galactose and UDP-N-acetylglucosamine transport activity. This chain is Probable UDP-sugar transporter protein SLC35A4, found in Pongo abelii (Sumatran orangutan).